A 311-amino-acid polypeptide reads, in one-letter code: Pyrimidine-specific ribonucleoside hydrolase RihA (311 aa).

Histidine 240 is a catalytic residue.

The protein belongs to the IUNH family. RihA subfamily.

Functionally, hydrolyzes with equal efficiency cytidine or uridine to ribose and cytosine or uracil, respectively. In Escherichia coli O45:K1 (strain S88 / ExPEC), this protein is Pyrimidine-specific ribonucleoside hydrolase RihA.